A 650-amino-acid polypeptide reads, in one-letter code: PTS system mannose-specific EIIBCA component (650 aa).

Residues 1-98 (MKLLAITSCP…PEELIQKALN (98 aa)) enclose the PTS EIIB type-2 domain. The active-site Phosphocysteine intermediate; for EIIB activity is the Cys-9. Residues 123–456 (IYRHLMNGVS…SLVTALFVNV (334 aa)) enclose the PTS EIIC type-2 domain. Transmembrane regions (helical) follow at residues 133 to 153 (FMVPFIVVGGLLIAVALTLGG), 174 to 194 (IGSASFSFMIPILAGYIAYSI), 199 to 219 (GLVPGMIGGYIAATGSFYDSA), 221 to 241 (GAGFLGGIIAGFLAGYAALWI), 256 to 276 (IIIIPVFASLIVGLAFVFLIG), 297 to 317 (SSILLALILGAMISFDMGGPV), and 336 to 356 (IMGPIAVAICIPPIGLGIATF). At Ser-365 the chain carries Phosphoserine. 3 consecutive transmembrane segments (helical) span residues 369–389 (MGKAAFTMGLFGITEGAIPFA), 396–416 (VIPSIMAGSMTGSVIAMIGNV), and 436–456 (VLMFFIAVIAGSLVTALFVNV). One can recognise a PTS EIIA type-2 domain in the interval 504–649 (DIISPELIEP…EEAYKLLEEI (146 aa)). His-566 (tele-phosphohistidine intermediate; for EIIA activity) is an active-site residue.

The protein resides in the cell membrane. It catalyses the reaction D-mannose(out) + N(pros)-phospho-L-histidyl-[protein] = D-mannose 6-phosphate(in) + L-histidyl-[protein]. Functionally, the phosphoenolpyruvate-dependent sugar phosphotransferase system (sugar PTS), a major carbohydrate active -transport system, catalyzes the phosphorylation of incoming sugar substrates concomitantly with their translocation across the cell membrane. This system is involved in mannose transport. The protein is PTS system mannose-specific EIIBCA component (manP) of Bacillus subtilis (strain 168).